A 432-amino-acid chain; its full sequence is Histidine--tRNA ligase (432 aa).

This sequence belongs to the class-II aminoacyl-tRNA synthetase family.

Its subcellular location is the cytoplasm. The catalysed reaction is tRNA(His) + L-histidine + ATP = L-histidyl-tRNA(His) + AMP + diphosphate + H(+). This chain is Histidine--tRNA ligase, found in Pyrococcus furiosus (strain ATCC 43587 / DSM 3638 / JCM 8422 / Vc1).